The sequence spans 649 residues: MSKFLDMLSGSQCVSLEKCGDVVVSTNDCMIALYCHFCRDLFTQLPEFLRHLQSNHSDVLHFTKEHNVYSVEELLSGEQGKAHEDAQSAGHNSSSGDSSSLMNSEDSRAIEGSEDNSDNSPMKPEQIGKQSEINLLAEVTNILLQTNDKELKPENGVFNRPRKKANNESSSLKICDLKSHTIARTSRKRMSMVKNRILRVLDSDLSAKLEIKPPEPNSKLSITEPIQEDNIPGTCFDTPTKPIPSSSQLSVRKSSLTEANQICTKYAEKKTAPTMPKLLNCVPKPILTSQQAHTNAEISEINETYHLAASQVTKTTKTFPVKITQIDILQPVKLPKTLITPINEEGVSDQVENSTNNINNAQSLPKENTKKFFKKRSELGIKAQGSPNKFFKIIKSKANPIIVKRVQTTSAKASTNKIQIRSNDKTNCFASEFNSTKIRKLKMENCVDLKSEDPCANTNTRLNKLATISSCEILKAVGLPAITDNPIEDTLLPDELETIRKKADQFIKIYRKYDSIWNYRKICPPAKPDFISQQIFALTREVNKTMLCNLANSDIKGIINQISVWHYNIYTQYIDLDTISENARYTLKLFSFLPVSFAYFCKCCDDIFILKKEYLKHLISHQVRFQCTKCIKVFKYKGYYEKHLRNAHS.

The C2H2-type 1 zinc-finger motif lies at 33 to 56 (LYCHFCRDLFTQLPEFLRHLQSNH). Residues 78–126 (EQGKAHEDAQSAGHNSSSGDSSSLMNSEDSRAIEGSEDNSDNSPMKPEQ) form a disordered region. Positions 88-104 (SAGHNSSSGDSSSLMNS) are enriched in low complexity. C2H2-type zinc fingers lie at residues 599–621 (YFCK…LISH) and 625–648 (FQCT…RNAH).

Belongs to the Teflon family. In terms of tissue distribution, expressed at a low level in a variety of tissues, highest expression is in testis.

It localises to the nucleus. It is found in the chromosome. Its function is as follows. Specifically required in males for proper segregation of autosomal bivalents at meiosis I. Expression is required in the male germ line prior to spermatocyte stage S4. May have a role as a bridging molecule maintaining adhesion to hold autosome bivalents together via heterochromatic connections. This Drosophila melanogaster (Fruit fly) protein is Protein teflon.